A 579-amino-acid chain; its full sequence is Adenine/guanine permease AZG1 (579 aa).

A run of 12 helical transmembrane segments spans residues 52-72 (AGTA…SILS), 131-151 (LIVA…LMAN), 183-203 (TALA…AIGF), 221-241 (AGIG…IGLV), 260-280 (ISLA…AGGS), 292-312 (MESP…YCLV), 320-340 (IYGI…VTAF), 379-399 (FWEA…GTLY), 414-434 (FAGQ…GSLL), 459-479 (AITV…LASI), 480-500 (PAWA…KSVT), and 514-534 (FVTM…IGGI).

The protein belongs to the nucleobase:cation symporter-2 (NCS2) (TC 2.A.40) family. Azg-like subfamily.

It is found in the membrane. In terms of biological role, transports natural purines (adenine and guanine) as well as purine analogs. Confers sensitivity to 8-azaadenine and 8-azaguanine (8-azg). The chain is Adenine/guanine permease AZG1 (AZG1) from Arabidopsis thaliana (Mouse-ear cress).